The following is an 84-amino-acid chain: Acetylcholine receptor subunit alpha (84 aa).

An intrachain disulfide couples Cys-7 to Cys-21. N-linked (GlcNAc...) asparagine glycans are attached at residues Asn-20 and Asn-66. Cysteines 71 and 72 form a disulfide.

This sequence belongs to the ligand-gated ion channel (TC 1.A.9) family. Acetylcholine receptor (TC 1.A.9.1) subfamily. Alpha-1/CHRNA1 sub-subfamily. In terms of assembly, one of the alpha chains that assemble within the acetylcholine receptor, a pentamer of two alpha chains, a beta, a delta, and a gamma (in immature muscle) or epsilon (in mature muscle) chains. The muscle heteropentamer composed of alpha-1, beta-1, delta, epsilon subunits interacts with the alpha-conotoxin ImII.

The protein resides in the postsynaptic cell membrane. It is found in the cell membrane. It catalyses the reaction K(+)(in) = K(+)(out). It carries out the reaction Na(+)(in) = Na(+)(out). Upon acetylcholine binding, the AChR responds by an extensive change in conformation that affects all subunits and leads to opening of an ion-conducting channel across the plasma membrane. This chain is Acetylcholine receptor subunit alpha (CHRNA1), found in Herpestes ichneumon (Egyptian mongoose).